The chain runs to 275 residues: Phosphate import ATP-binding protein PstB (275 aa).

The ABC transporter domain occupies 28–270; the sequence is MSAKNVSVFY…PREERTKDYI (243 aa). 60–67 lines the ATP pocket; the sequence is GPSGCGKS.

Belongs to the ABC transporter superfamily. Phosphate importer (TC 3.A.1.7) family. In terms of assembly, the complex is composed of two ATP-binding proteins (PstB), two transmembrane proteins (PstC and PstA) and a solute-binding protein (PstS).

It is found in the cell inner membrane. It carries out the reaction phosphate(out) + ATP + H2O = ADP + 2 phosphate(in) + H(+). Part of the ABC transporter complex PstSACB involved in phosphate import. Responsible for energy coupling to the transport system. This Novosphingobium aromaticivorans (strain ATCC 700278 / DSM 12444 / CCUG 56034 / CIP 105152 / NBRC 16084 / F199) protein is Phosphate import ATP-binding protein PstB.